The primary structure comprises 450 residues: MFS-type transporter avaK (450 aa).

The next 8 helical transmembrane spans lie at 18–38 (VMALNSLLILFTNFAIFLSMP), 100–120 (RVVCIYSDVLPLSLVWLSGLL), 148–168 (AVALLRLHSVFIVAKIFAAPA), 171–191 (ALVALTSAWTPFLISLAMLFV), 244–264 (APIIIVNLVASITKSSNHFLL), 280–300 (LVLVIREASSLLTYLVLMPAA), 329–349 (FGFFSIALAGTPVVYVLALAF), and 408–428 (GWLGIPYIAAGLFFITVLVAV).

It belongs to the major facilitator superfamily.

Its subcellular location is the membrane. Its pathway is secondary metabolite biosynthesis. In terms of biological role, MFS-type transporter; part of the cluster that mediates the biosynthesis of a highly modified cyclo-arginine-tryptophan dipeptide (cRW). The protein is MFS-type transporter avaK of Aspergillus versicolor.